A 294-amino-acid chain; its full sequence is NAD kinase (294 aa).

The Proton acceptor role is filled by aspartate 74. NAD(+) contacts are provided by residues 74-75 (DG), 148-149 (NE), histidine 159, arginine 176, aspartate 178, 189-194 (TAYSLS), and glutamine 249.

The protein belongs to the NAD kinase family. A divalent metal cation serves as cofactor.

It localises to the cytoplasm. It catalyses the reaction NAD(+) + ATP = ADP + NADP(+) + H(+). Functionally, involved in the regulation of the intracellular balance of NAD and NADP, and is a key enzyme in the biosynthesis of NADP. Catalyzes specifically the phosphorylation on 2'-hydroxyl of the adenosine moiety of NAD to yield NADP. The polypeptide is NAD kinase (Vibrio vulnificus (strain YJ016)).